Consider the following 471-residue polypeptide: Ribulose bisphosphate carboxylase large chain (471 aa).

Positions 1–2 (MS) are excised as a propeptide. Residue proline 3 is modified to N-acetylproline. Residue lysine 14 is modified to N6,N6,N6-trimethyllysine. Positions 123 and 173 each coordinate substrate. The active-site Proton acceptor is lysine 175. Lysine 177 lines the substrate pocket. Positions 201, 203, and 204 each coordinate Mg(2+). Lysine 201 bears the N6-carboxylysine mark. The active-site Proton acceptor is histidine 294. Residues arginine 295, histidine 327, and serine 379 each coordinate substrate.

The protein belongs to the RuBisCO large chain family. Type I subfamily. In terms of assembly, heterohexadecamer of 8 large chains and 8 small chains; disulfide-linked. The disulfide link is formed within the large subunit homodimers. It depends on Mg(2+) as a cofactor. In terms of processing, the disulfide bond which can form in the large chain dimeric partners within the hexadecamer appears to be associated with oxidative stress and protein turnover.

The protein resides in the plastid. The protein localises to the chloroplast. The catalysed reaction is 2 (2R)-3-phosphoglycerate + 2 H(+) = D-ribulose 1,5-bisphosphate + CO2 + H2O. It carries out the reaction D-ribulose 1,5-bisphosphate + O2 = 2-phosphoglycolate + (2R)-3-phosphoglycerate + 2 H(+). Its function is as follows. RuBisCO catalyzes two reactions: the carboxylation of D-ribulose 1,5-bisphosphate, the primary event in carbon dioxide fixation, as well as the oxidative fragmentation of the pentose substrate in the photorespiration process. Both reactions occur simultaneously and in competition at the same active site. This chain is Ribulose bisphosphate carboxylase large chain, found in Drymophloeus subdistichus (Palm tree).